The following is a 150-amino-acid chain: Nascent polypeptide-associated complex subunit beta (150 aa).

Disordered stretches follow at residues 1 to 45 and 123 to 150; these read MADV…LQQS and YQNM…NKVE. Residues 23–32 show a composition bias toward basic residues; the sequence is TPRRKVKRAP. One can recognise an NAC-A/B domain in the interval 36–101; sequence GADDKKLQQS…GEDKELTELV (66 aa).

The protein belongs to the NAC-beta family. In terms of assembly, part of the nascent polypeptide-associated complex (NAC), consisting of EGD2 and EGD1. NAC associates with ribosomes via EGD1.

It localises to the cytoplasm. The protein localises to the nucleus. Component of the nascent polypeptide-associated complex (NAC), a dynamic component of the ribosomal exit tunnel, protecting the emerging polypeptides from interaction with other cytoplasmic proteins to ensure appropriate nascent protein targeting. The NAC complex also promotes mitochondrial protein import by enhancing productive ribosome interactions with the outer mitochondrial membrane and blocks the inappropriate interaction of ribosomes translating non-secretory nascent polypeptides with translocation sites in the membrane of the endoplasmic reticulum. EGD1 may act as a transcription factor that exert a negative effect on the expression of several genes that are transcribed by RNA polymerase II. The polypeptide is Nascent polypeptide-associated complex subunit beta (EGD1) (Chaetomium globosum (strain ATCC 6205 / CBS 148.51 / DSM 1962 / NBRC 6347 / NRRL 1970) (Soil fungus)).